The primary structure comprises 310 residues: Olfactory receptor 5AR1 (310 aa).

Residues 1–28 lie on the Extracellular side of the membrane; that stretch reads MDKENSSMVTEFIFMGITQDPQMEIIFF. Asn5 is a glycosylation site (N-linked (GlcNAc...) asparagine). Residues 29 to 49 traverse the membrane as a helical segment; it reads VVFLIVYLVNVVGNIGMIILI. The Cytoplasmic portion of the chain corresponds to 50-58; sequence TTDTQLHTP. The helical transmembrane segment at 59-79 threads the bilayer; sequence MYFFLCNLSFVDLGYSSAIAP. Topologically, residues 80–100 are extracellular; sequence RMLADFLTNHKVISFSSCATQ. Residues Cys97 and Cys189 are joined by a disulfide bond. The chain crosses the membrane as a helical span at residues 101–120; that stretch reads FAFFVGFVDAECYVLAAMAY. Residues 121–139 lie on the Cytoplasmic side of the membrane; that stretch reads GRFVAICRPLHYSTFMSKQ. The helical transmembrane segment at 140–160 threads the bilayer; the sequence is VCLALMLGSYLAGLVSLVAHT. At 161 to 205 the chain is on the extracellular side; it reads TLTFSLSYCGSNIINHFFCEIPPLLALSCSDTYISEILLFSLCGF. The chain crosses the membrane as a helical span at residues 206–226; it reads IEFSTILIIFISYTFILVAII. The Cytoplasmic portion of the chain corresponds to 227–239; it reads RMRSAEGRLKAFS. Residues 240–260 form a helical membrane-spanning segment; sequence TCGSHLTGITLFYGTVMFMYL. The Extracellular portion of the chain corresponds to 261–271; the sequence is RPTSSYSLDQD. A helical membrane pass occupies residues 272–292; it reads KWASVFYTVIIPMLNPLIYSL. Topologically, residues 293-310 are cytoplasmic; it reads RNKDVKAAFKKLIGKKSQ.

This sequence belongs to the G-protein coupled receptor 1 family.

Its subcellular location is the cell membrane. Functionally, odorant receptor. This chain is Olfactory receptor 5AR1, found in Homo sapiens (Human).